Here is a 397-residue protein sequence, read N- to C-terminus: Formate-dependent phosphoribosylglycinamide formyltransferase (397 aa).

N(1)-(5-phospho-beta-D-ribosyl)glycinamide is bound by residues 21-22 (EL) and E81. Residues R113, K154, 194 to 197 (EEFV), and E202 each bind ATP. An ATP-grasp domain is found at 118 to 312 (RFAAEKLKLP…EFQIHVRSAI (195 aa)). Mg(2+) contacts are provided by E271 and E283. N(1)-(5-phospho-beta-D-ribosyl)glycinamide is bound by residues D290, K361, and 368–369 (RR).

This sequence belongs to the PurK/PurT family. As to quaternary structure, homodimer.

It carries out the reaction N(1)-(5-phospho-beta-D-ribosyl)glycinamide + formate + ATP = N(2)-formyl-N(1)-(5-phospho-beta-D-ribosyl)glycinamide + ADP + phosphate + H(+). Its pathway is purine metabolism; IMP biosynthesis via de novo pathway; N(2)-formyl-N(1)-(5-phospho-D-ribosyl)glycinamide from N(1)-(5-phospho-D-ribosyl)glycinamide (formate route): step 1/1. Its function is as follows. Involved in the de novo purine biosynthesis. Catalyzes the transfer of formate to 5-phospho-ribosyl-glycinamide (GAR), producing 5-phospho-ribosyl-N-formylglycinamide (FGAR). Formate is provided by PurU via hydrolysis of 10-formyl-tetrahydrofolate. The polypeptide is Formate-dependent phosphoribosylglycinamide formyltransferase (Saccharolobus solfataricus (strain ATCC 35092 / DSM 1617 / JCM 11322 / P2) (Sulfolobus solfataricus)).